The chain runs to 463 residues: tRNA-2-methylthio-N(6)-dimethylallyladenosine synthase (463 aa).

The 121-residue stretch at arginine 5–glutamine 125 folds into the MTTase N-terminal domain. Positions 14, 50, 88, 166, 170, and 173 each coordinate [4Fe-4S] cluster. The region spanning arginine 152–alanine 384 is the Radical SAM core domain. The TRAM domain occupies lysine 387–serine 449.

It belongs to the methylthiotransferase family. MiaB subfamily. In terms of assembly, monomer. It depends on [4Fe-4S] cluster as a cofactor.

The protein localises to the cytoplasm. The enzyme catalyses N(6)-dimethylallyladenosine(37) in tRNA + (sulfur carrier)-SH + AH2 + 2 S-adenosyl-L-methionine = 2-methylsulfanyl-N(6)-dimethylallyladenosine(37) in tRNA + (sulfur carrier)-H + 5'-deoxyadenosine + L-methionine + A + S-adenosyl-L-homocysteine + 2 H(+). Functionally, catalyzes the methylthiolation of N6-(dimethylallyl)adenosine (i(6)A), leading to the formation of 2-methylthio-N6-(dimethylallyl)adenosine (ms(2)i(6)A) at position 37 in tRNAs that read codons beginning with uridine. In Rhodopseudomonas palustris (strain TIE-1), this protein is tRNA-2-methylthio-N(6)-dimethylallyladenosine synthase.